The following is a 226-amino-acid chain: Peroxynitrite isomerase 2 (226 aa).

The GXWXGXG motif lies at 73-79 (GVWRGEG). Positions 189 and 216 each coordinate heme b.

Belongs to the nitrobindin family. Homodimer. Heme b serves as cofactor.

The catalysed reaction is peroxynitrite = nitrate. The protein operates within nitrogen metabolism. In terms of biological role, heme-binding protein able to scavenge peroxynitrite and to protect free L-tyrosine against peroxynitrite-mediated nitration, by acting as a peroxynitrite isomerase that converts peroxynitrite to nitrate. Therefore, this protein likely plays a role in peroxynitrite sensing and in the detoxification of reactive nitrogen and oxygen species (RNS and ROS, respectively). Is able to bind nitric oxide (NO) in vitro, but may act as a sensor of peroxynitrite levels in vivo. The polypeptide is Peroxynitrite isomerase 2 (Mycobacterium bovis (strain ATCC BAA-935 / AF2122/97)).